Reading from the N-terminus, the 400-residue chain is Nicotinate phosphoribosyltransferase (400 aa).

H220 is subject to Phosphohistidine; by autocatalysis.

The protein belongs to the NAPRTase family. Post-translationally, transiently phosphorylated on a His residue during the reaction cycle. Phosphorylation strongly increases the affinity for substrates and increases the rate of nicotinate D-ribonucleotide production. Dephosphorylation regenerates the low-affinity form of the enzyme, leading to product release.

The catalysed reaction is nicotinate + 5-phospho-alpha-D-ribose 1-diphosphate + ATP + H2O = nicotinate beta-D-ribonucleotide + ADP + phosphate + diphosphate. It functions in the pathway cofactor biosynthesis; NAD(+) biosynthesis; nicotinate D-ribonucleotide from nicotinate: step 1/1. Functionally, catalyzes the synthesis of beta-nicotinate D-ribonucleotide from nicotinate and 5-phospho-D-ribose 1-phosphate at the expense of ATP. This is Nicotinate phosphoribosyltransferase from Escherichia coli (strain K12 / MC4100 / BW2952).